The following is a 154-amino-acid chain: 6,7-dimethyl-8-ribityllumazine synthase (154 aa).

5-amino-6-(D-ribitylamino)uracil contacts are provided by residues Phe22, 56-58 (AFE), and 80-82 (TVI). 85–86 (AT) serves as a coordination point for (2S)-2-hydroxy-3-oxobutyl phosphate. Catalysis depends on His88, which acts as the Proton donor. 5-amino-6-(D-ribitylamino)uracil is bound at residue Phe113. Residue Arg127 participates in (2S)-2-hydroxy-3-oxobutyl phosphate binding.

The protein belongs to the DMRL synthase family. In terms of assembly, forms an icosahedral capsid composed of 60 subunits, arranged as a dodecamer of pentamers.

The enzyme catalyses (2S)-2-hydroxy-3-oxobutyl phosphate + 5-amino-6-(D-ribitylamino)uracil = 6,7-dimethyl-8-(1-D-ribityl)lumazine + phosphate + 2 H2O + H(+). It participates in cofactor biosynthesis; riboflavin biosynthesis; riboflavin from 2-hydroxy-3-oxobutyl phosphate and 5-amino-6-(D-ribitylamino)uracil: step 1/2. Functionally, catalyzes the formation of 6,7-dimethyl-8-ribityllumazine by condensation of 5-amino-6-(D-ribitylamino)uracil with 3,4-dihydroxy-2-butanone 4-phosphate. This is the penultimate step in the biosynthesis of riboflavin. This is 6,7-dimethyl-8-ribityllumazine synthase from Bacillus licheniformis (strain ATCC 14580 / DSM 13 / JCM 2505 / CCUG 7422 / NBRC 12200 / NCIMB 9375 / NCTC 10341 / NRRL NRS-1264 / Gibson 46).